The following is a 433-amino-acid chain: Xylose isomerase (433 aa).

Catalysis depends on residues His-99 and Asp-102. Residues Glu-230, Glu-266, His-269, Asp-294, Asp-305, Asp-307, and Asp-337 each contribute to the Mg(2+) site.

This sequence belongs to the xylose isomerase family. As to quaternary structure, homotetramer. Mg(2+) serves as cofactor.

Its subcellular location is the cytoplasm. It carries out the reaction alpha-D-xylose = alpha-D-xylulofuranose. This Cereibacter sphaeroides (strain ATCC 17023 / DSM 158 / JCM 6121 / CCUG 31486 / LMG 2827 / NBRC 12203 / NCIMB 8253 / ATH 2.4.1.) (Rhodobacter sphaeroides) protein is Xylose isomerase.